The sequence spans 623 residues: MTSTYTRFDTVFLFSRFAGAKYSPLLPSPSFTLSTSGIHIRTKPNSRFHSIIASSSSSSVVAGTDSIEIKSLPTKPIEGQKTGTSGLRKKVKVFMEDNYLANWIQALFNSLPLEDYKNATLVLGGDGRYFNKEASQIIIKIAAGNGVGQILVGKEGILSTPAVSAVIRKRKANGGFIMSASHNPGGPEYDWGIKFNYSSGQPAPETITDKIYGNTLSISEIKVAEIPDIDLSQVGVTKYGNFSVEVIDPVSDYLELMEDVFDFDLIRGLLSRSDFGFMFDAMHAVTGAYAKPIFVDNLGAKPDSISNGVPLEDFGHGHPDPNLTYAKDLVDVMYRDNGPDFGAASDGDGDRNMVLGNKFFVTPSDSVAIIAANAQEAIPYFRAGPKGLARSMPTSGALDRVAEKLKLPFFEVPTGWKFFGNLMDAGKLSICGEESFGTGSDHIREKDGIWAVLAWLSILAHRNKDTKPGDKLVSVADVVKEYWATYGRNFFSRYDYEECESEGANKMIEYLREILSKSKAGDVYGNYVLQFADDFSYTDPVDGSVASKQGVRFVFTDGSRIIFRLSGTGSAGATVRIYIEQFEPDVSKHDVDAQIALKPLIDLALSVSKLKDFTGREKPTVIT.

Residues 1–63 (MTSTYTRFDT…SSSSSSVVAG (63 aa)) constitute a chloroplast transit peptide. Alpha-D-glucose 1,6-bisphosphate contacts are provided by arginine 88 and serine 181. The active-site Phosphoserine intermediate is the serine 181. Mg(2+) is bound by residues serine 181, aspartate 346, aspartate 348, and aspartate 350. Serine 181 carries the phosphoserine modification. Positions 350, 351, 414, 433, 435, and 446 each coordinate alpha-D-glucose 1,6-bisphosphate.

It belongs to the phosphohexose mutase family. Monomer. Mg(2+) serves as cofactor. In terms of tissue distribution, expressed in flowers, siliques and germinating seeds.

The protein localises to the plastid. It localises to the chloroplast. It carries out the reaction alpha-D-glucose 1-phosphate = alpha-D-glucose 6-phosphate. The enzyme catalyses O-phospho-L-seryl-[protein] + alpha-D-glucose 1-phosphate = alpha-D-glucose 1,6-bisphosphate + L-seryl-[protein]. It catalyses the reaction alpha-D-glucose 1,6-bisphosphate + L-seryl-[protein] = O-phospho-L-seryl-[protein] + alpha-D-glucose 6-phosphate. Inhibited by the Calvin cycle intermediates fructose-1,6-bisphosphate and ribulose-1,5-bisphosphate. Functionally, catalyzes the reversible isomerization of alpha-D-glucose 1-phosphate to alpha-D-glucose 6-phosphate. The mechanism proceeds via the intermediate compound alpha-D-glucose 1,6-bisphosphate. This enzyme participates in both the breakdown and synthesis of glucose. Factor that affects seed oil content. Accumulated starch in young embryos may play an important role in providing carbon resources for seed storage lipid biosynthesis in oilseed plants. Promotes gravitropic responses, negative in shoots but positive in roots, by facilitating starch granules (statoliths) formation in hypocotyls and roots columella. The polypeptide is Phosphoglucomutase, chloroplastic (Arabidopsis thaliana (Mouse-ear cress)).